Here is a 243-residue protein sequence, read N- to C-terminus: Pyridoxine 5'-phosphate synthase (243 aa).

Position 9 (Asn9) interacts with 3-amino-2-oxopropyl phosphate. Residue 11–12 (DH) participates in 1-deoxy-D-xylulose 5-phosphate binding. A 3-amino-2-oxopropyl phosphate-binding site is contributed by Arg20. His45 (proton acceptor) is an active-site residue. Positions 47 and 52 each coordinate 1-deoxy-D-xylulose 5-phosphate. The Proton acceptor role is filled by Glu72. 1-deoxy-D-xylulose 5-phosphate is bound at residue Thr102. His193 (proton donor) is an active-site residue. 3-amino-2-oxopropyl phosphate contacts are provided by residues Gly194 and 215–216 (GH).

This sequence belongs to the PNP synthase family. Homooctamer; tetramer of dimers.

The protein localises to the cytoplasm. It catalyses the reaction 3-amino-2-oxopropyl phosphate + 1-deoxy-D-xylulose 5-phosphate = pyridoxine 5'-phosphate + phosphate + 2 H2O + H(+). The protein operates within cofactor biosynthesis; pyridoxine 5'-phosphate biosynthesis; pyridoxine 5'-phosphate from D-erythrose 4-phosphate: step 5/5. In terms of biological role, catalyzes the complicated ring closure reaction between the two acyclic compounds 1-deoxy-D-xylulose-5-phosphate (DXP) and 3-amino-2-oxopropyl phosphate (1-amino-acetone-3-phosphate or AAP) to form pyridoxine 5'-phosphate (PNP) and inorganic phosphate. The protein is Pyridoxine 5'-phosphate synthase of Salmonella typhimurium (strain LT2 / SGSC1412 / ATCC 700720).